The sequence spans 184 residues: Large ribosomal subunit protein uL6 (184 aa).

It belongs to the universal ribosomal protein uL6 family. Part of the 50S ribosomal subunit.

Its function is as follows. This protein binds to the 23S rRNA, and is important in its secondary structure. It is located near the subunit interface in the base of the L7/L12 stalk, and near the tRNA binding site of the peptidyltransferase center. The sequence is that of Large ribosomal subunit protein uL6 from Desulfurococcus amylolyticus (strain DSM 18924 / JCM 16383 / VKM B-2413 / 1221n) (Desulfurococcus kamchatkensis).